The following is a 213-amino-acid chain: V-type proton ATPase subunit c'' (213 aa).

At 1–14 (MNKESKDDDMSLGK) the chain is on the vacuolar side. Residues 15 to 35 (FSFSHFLYYLVLIVVIVYGLY) form a helical membrane-spanning segment. At 36–61 (KLFTGHGSDINFGKFLLRTSPYMWAN) the chain is on the cytoplasmic side. Residues 62-82 (LGIALCVGLSVVGAAWGIFIT) traverse the membrane as a helical segment. Topologically, residues 83–100 (GSSMIGAGVRAPRITTKN) are vacuolar. The helical transmembrane segment at 101 to 121 (LISIIFCEVVAIYGLIIAIVF) threads the bilayer. The Cytoplasmic segment spans residues 122 to 144 (SSKLTVATAENMYSKSNLYTGYS). A helical transmembrane segment spans residues 145-165 (LFWAGITVGASNLICGIAVGI). The Vacuolar segment spans residues 166-183 (TGATAAISDAADSALFVK). Residues 184–204 (ILVIEIFGSILGLLGLIVGLL) form a helical membrane-spanning segment. Over 205–213 (MAGKASEFQ) the chain is Cytoplasmic.

This sequence belongs to the V-ATPase proteolipid subunit family. In terms of assembly, V-ATPase is a heteromultimeric enzyme composed of a peripheral catalytic V1 complex (components A to H) attached to an integral membrane V0 proton pore complex (components: a, c, c', c'', d, e, f and VOA1). The decameric c-ring forms the proton-conducting pore, and is composed of eight proteolipid subunits c, one subunit c' and one subunit c''.

It localises to the vacuole membrane. In terms of biological role, proton-conducting pore forming subunit of the V0 complex of vacuolar(H+)-ATPase (V-ATPase), a multisubunit enzyme composed of a peripheral complex (V1) that hydrolyzes ATP and a membrane integral complex (V0) that translocates protons. V-ATPase is responsible for acidifying and maintaining the pH of intracellular compartments. The polypeptide is V-type proton ATPase subunit c'' (VMA16) (Saccharomyces cerevisiae (strain ATCC 204508 / S288c) (Baker's yeast)).